The primary structure comprises 320 residues: Heterogeneous nuclear ribonucleoprotein A1-like 3 (320 aa).

2 RRM domains span residues Arg14–Arg97 and Lys105–Gln184. Disordered stretches follow at residues Ser182–Arg218 and Ser271–Phe320. Residues Ser197–Arg218 show a composition bias toward gly residues. Low complexity predominate over residues Ser308–Phe320.

The sequence is that of Heterogeneous nuclear ribonucleoprotein A1-like 3 from Homo sapiens (Human).